The chain runs to 244 residues: Transmembrane protein 176A (244 aa).

Residue S42 is modified to Phosphoserine. 4 consecutive transmembrane segments (helical) span residues 60 to 80 (VLVA…VLGG), 92 to 112 (SEGA…VAFL), 122 to 142 (ALMR…AIVI), and 204 to 224 (LLGI…VYIW).

Belongs to the TMEM176 family. As to quaternary structure, interacts with MCOLN2. Specifically expressed in lung, kidney and spleen.

Its subcellular location is the membrane. The sequence is that of Transmembrane protein 176A (Tmem176a) from Mus musculus (Mouse).